The following is a 150-amino-acid chain: 3-dehydroquinate dehydratase (150 aa).

Residue Y26 is the Proton acceptor of the active site. N77, H83, and D90 together coordinate substrate. Residue H103 is the Proton donor of the active site. Substrate-binding positions include 104–105 (LS) and R114.

Belongs to the type-II 3-dehydroquinase family. As to quaternary structure, homododecamer.

The enzyme catalyses 3-dehydroquinate = 3-dehydroshikimate + H2O. It functions in the pathway metabolic intermediate biosynthesis; chorismate biosynthesis; chorismate from D-erythrose 4-phosphate and phosphoenolpyruvate: step 3/7. Catalyzes a trans-dehydration via an enolate intermediate. The sequence is that of 3-dehydroquinate dehydratase from Histophilus somni (strain 129Pt) (Haemophilus somnus).